The following is a 477-amino-acid chain: Adenylyl cyclase-associated protein 2 (477 aa).

At Ala-2 the chain carries N-acetylalanine. 2 disordered regions span residues 224-261 (VLSS…PSRS) and 274-323 (TKGL…KHAP). Residues 230–246 (GLPPPPPPPPPPGPPPL) are compositionally biased toward pro residues. Residues Ser-301 and Ser-309 each carry the phosphoserine modification. Residues 301 to 320 (SPTKSHTPSPTSPKSYPSQK) are compositionally biased toward low complexity. A C-CAP/cofactor C-like domain is found at 317–455 (PSQKHAPVLE…QDGDYREFPI (139 aa)).

It belongs to the CAP family.

The protein resides in the cell membrane. Functionally, involved in the regulation of actin polymerization. This Pongo abelii (Sumatran orangutan) protein is Adenylyl cyclase-associated protein 2 (CAP2).